A 252-amino-acid polypeptide reads, in one-letter code: 5-oxoprolinase subunit A (252 aa).

It belongs to the LamB/PxpA family. Forms a complex composed of PxpA, PxpB and PxpC.

It carries out the reaction 5-oxo-L-proline + ATP + 2 H2O = L-glutamate + ADP + phosphate + H(+). Its function is as follows. Catalyzes the cleavage of 5-oxoproline to form L-glutamate coupled to the hydrolysis of ATP to ADP and inorganic phosphate. In Corynebacterium glutamicum (strain ATCC 13032 / DSM 20300 / JCM 1318 / BCRC 11384 / CCUG 27702 / LMG 3730 / NBRC 12168 / NCIMB 10025 / NRRL B-2784 / 534), this protein is 5-oxoprolinase subunit A.